The chain runs to 406 residues: Argininosuccinate synthase (406 aa).

ATP is bound at residue 9–17; the sequence is AYSGGLDTS. Position 86 (Tyr-86) interacts with L-citrulline. Gly-116 provides a ligand contact to ATP. L-aspartate-binding residues include Thr-118, Asn-122, and Asp-123. Position 122 (Asn-122) interacts with L-citrulline. L-citrulline is bound by residues Arg-126, Ser-174, Ser-183, Glu-259, and Tyr-271.

Belongs to the argininosuccinate synthase family. Type 1 subfamily. Homotetramer.

It localises to the cytoplasm. The catalysed reaction is L-citrulline + L-aspartate + ATP = 2-(N(omega)-L-arginino)succinate + AMP + diphosphate + H(+). Its pathway is amino-acid biosynthesis; L-arginine biosynthesis; L-arginine from L-ornithine and carbamoyl phosphate: step 2/3. The chain is Argininosuccinate synthase from Geobacillus kaustophilus (strain HTA426).